We begin with the raw amino-acid sequence, 445 residues long: MKNPEAQQDVSVSQGFRMLFYTMKPSETSFQTLEEVPDYVKKATPFFISLMLLELVVSWILKGKPPGRLDDALTSISAGVLSRLPSLFFRSIELTSYIYIWENYRLFNLPWDSPWTWYSAFLGVDFGYYWFHRMAHEVNIMWAGHQTHHSSEDYNLSTALRQSVLQIYTSWIFYSPLALFIPPSVYAVHLQFNLLYQFWIHTEVINNLGPLELILNTPSHHRVHHGRNRYCIDKNYAGVLIIWDKIFGTFEAENEKVVYGLTHPINTFEPIKVQFHHLFSIWTTFWATPGFFNKFSVIFKGPGWGPGKPRLGLSEEIPEVTGKEVPFSSSSSQLLKIYTVVQFALMLAFYEETFADTAALSQVTLLLRVCFIILTLTSIGFLLDQRPKAAIMETLRCLMFLMLYRFGHLKPLVPSLSSAFEIVFSICIAFWGVRSMKQLTSHPWK.

The next 2 helical transmembrane spans lie at 43-63 (ATPF…ILKG) and 111-131 (WDSP…YYWF). The region spanning 120–249 (AFLGVDFGYY…LIIWDKIFGT (130 aa)) is the Fatty acid hydroxylase domain. A Histidine box-1 motif is present at residues 132–136 (HRMAH). Residues 145-149 (HQTHH) carry the Histidine box-2 motif. The Histidine box-3 signature appears at 221–225 (HRVHH). Transmembrane regions (helical) follow at residues 334–354 (LLKI…EETF), 363–383 (VTLL…GFLL), and 413–433 (VPSL…FWGV).

It belongs to the sterol desaturase family. TMEM195 subfamily. Requires Fe cation as cofactor.

It localises to the endoplasmic reticulum membrane. The catalysed reaction is 1-O-(1,2-saturated-alkyl)-sn-glycerol + (6R)-L-erythro-5,6,7,8-tetrahydrobiopterin + O2 = a 1-(1-hydroxyalkyl)-sn-glycerol + (6R)-L-erythro-6,7-dihydrobiopterin + H2O. Functionally, glyceryl-ether monooxygenase that cleaves the O-alkyl bond of ether lipids. Ether lipids are essential components of brain membranes. In Homo sapiens (Human), this protein is Alkylglycerol monooxygenase (AGMO).